The chain runs to 309 residues: Polyprenal reductase (309 aa).

Residues 1-3 are Cytoplasmic-facing; it reads MFH. Residues 4–24 traverse the membrane as a helical segment; sequence ILSIVNIIWLLLALCFGAAFC. Over 25–67 the chain is Lumenal; sequence LNKFSVKLPNRVEHVFQDFIRYGKTKENIKRASWQLVFDLSKR. The chain crosses the membrane as a helical span at residues 68-88; it reads YFYHFYVVSVMWNGLLLLFSI. The Cytoplasmic portion of the chain corresponds to 89 to 114; sequence RSVVMSEAFPDWIIDVLGSLTGRSRG. The chain crosses the membrane as a helical span at residues 115–135; sequence AWNEIHLSTLLLQVLLWVHTL. At 136–150 the chain is on the lumenal side; that stretch reads RRLLECLFVSVFSDG. The chain crosses the membrane as a helical span at residues 151–171; it reads VINVVQYAFGLSYYIILGLTV. Residues 172–185 are Cytoplasmic-facing; sequence LCTNDSLPQSESVS. A helical transmembrane segment spans residues 186-206; sequence FFNQLTWYHVVGTLLFFWASF. Residues 207–255 lie on the Lumenal side of the membrane; sequence LQHQSLSLLAKMRTDSSGKVETLAHKMPCGGWFELVSCPHYLAELLIYA. A helical membrane pass occupies residues 256–276; that stretch reads AMCVCCGCASLTWWMVVLYVL. Residues 277–309 lie on the Cytoplasmic side of the membrane; the sequence is CNQALAAQLCHEYYRSKFKTYPHHRKAFIPFVL.

The protein belongs to the steroid 5-alpha reductase family. Polyprenal reductase subfamily.

It localises to the endoplasmic reticulum membrane. It carries out the reaction a di-trans,poly-cis-dolichal + NADP(+) = a di-trans,poly-cis-polyprenal + NADPH + H(+). The catalysed reaction is a 3-oxo-5alpha-steroid + NADP(+) = a 3-oxo-Delta(4)-steroid + NADPH + H(+). It catalyses the reaction androst-4-ene-3,17-dione + NADPH + H(+) = 5alpha-androstan-3,17-dione + NADP(+). The enzyme catalyses 17beta-hydroxy-5alpha-androstan-3-one + NADP(+) = testosterone + NADPH + H(+). Its pathway is protein modification; protein glycosylation. In terms of biological role, plays a key role in early steps of protein N-linked glycosylation by being involved in the conversion of polyprenol into dolichol. Acts as a polyprenal reductase that mediates the reduction of polyprenal into dolichal in a NADP-dependent mechanism. Dolichols are required for the synthesis of dolichol-linked monosaccharides and the oligosaccharide precursor used for N-glycosylation. Also able to convert testosterone (T) into 5-alpha-dihydrotestosterone (DHT). The chain is Polyprenal reductase (srd5a3) from Danio rerio (Zebrafish).